The following is a 533-amino-acid chain: Zona pellucida sperm-binding protein 3 receptor (533 aa).

Residues Met-1–Gly-28 form the signal peptide. 7 consecutive Sushi domains span residues Asp-29–Lys-88, Lys-89–Ile-150, Val-151–Lys-215, Val-216–Pro-275, Asn-276–Arg-342, Val-343–Ser-408, and Ala-409–Trp-467. 14 disulfides stabilise this stretch: Cys-30/Cys-74, Cys-60/Cys-86, Cys-91/Cys-132, Cys-118/Cys-148, Cys-153/Cys-196, Cys-182/Cys-213, Cys-218/Cys-260, Cys-246/Cys-273, Cys-278/Cys-328, Cys-312/Cys-340, Cys-345/Cys-393, Cys-378/Cys-406, Cys-411/Cys-452, and Cys-438/Cys-465. Residues Asn-68 and Asn-77 are each glycosylated (N-linked (GlcNAc...) asparagine). N-linked (GlcNAc...) asparagine glycans are attached at residues Asn-185, Asn-191, and Asn-200. 2 N-linked (GlcNAc...) asparagine glycosylation sites follow: Asn-433 and Asn-455.

In terms of assembly, homooligomer; disulfide-linked. May contain 6-8 monomers per oligomer. In terms of processing, the N-terminus may be blocked. As to expression, testis. Not expressed in heart, brain, liver or kidney.

The protein resides in the cytoplasmic vesicle. Its subcellular location is the secretory vesicle. The protein localises to the acrosome lumen. Its function is as follows. Probably involved in the formation of the dense core and M1 domain of the acrosome. May also regulate the release of certain secretory proteins following the acrosomal reaction. This Cavia porcellus (Guinea pig) protein is Zona pellucida sperm-binding protein 3 receptor (ZP3R).